Here is a 253-residue protein sequence, read N- to C-terminus: 3-deoxy-manno-octulosonate cytidylyltransferase (253 aa).

The protein belongs to the KdsB family.

It is found in the cytoplasm. It carries out the reaction 3-deoxy-alpha-D-manno-oct-2-ulosonate + CTP = CMP-3-deoxy-beta-D-manno-octulosonate + diphosphate. The protein operates within nucleotide-sugar biosynthesis; CMP-3-deoxy-D-manno-octulosonate biosynthesis; CMP-3-deoxy-D-manno-octulosonate from 3-deoxy-D-manno-octulosonate and CTP: step 1/1. Its pathway is bacterial outer membrane biogenesis; lipopolysaccharide biosynthesis. Functionally, activates KDO (a required 8-carbon sugar) for incorporation into bacterial lipopolysaccharide in Gram-negative bacteria. This is 3-deoxy-manno-octulosonate cytidylyltransferase from Geotalea daltonii (strain DSM 22248 / JCM 15807 / FRC-32) (Geobacter daltonii).